Reading from the N-terminus, the 166-residue chain is Small ribosomal subunit protein uS5 (166 aa).

In terms of domain architecture, S5 DRBM spans 12–75; that stretch reads YIEKLVQVNR…EAARRNMIQV (64 aa).

This sequence belongs to the universal ribosomal protein uS5 family. Part of the 30S ribosomal subunit. Contacts proteins S4 and S8.

Its function is as follows. With S4 and S12 plays an important role in translational accuracy. Functionally, located at the back of the 30S subunit body where it stabilizes the conformation of the head with respect to the body. This chain is Small ribosomal subunit protein uS5, found in Pseudomonas fluorescens (strain Pf0-1).